The chain runs to 219 residues: Urease subunit gamma/beta (219 aa).

Residues 1 to 101 (MFLTPREQEK…LVTVRNPIKS (101 aa)) are urease gamma. The segment at 102–219 (SKKTLNTYII…IKRAKERGFA (118 aa)) is urease beta.

It in the N-terminal section; belongs to the urease gamma subunit family. This sequence in the C-terminal section; belongs to the urease beta subunit family. Heterohexamer of 3 UreC (alpha) and 3 UreAB (gamma/beta) subunits.

The protein localises to the cytoplasm. The enzyme catalyses urea + 2 H2O + H(+) = hydrogencarbonate + 2 NH4(+). Its pathway is nitrogen metabolism; urea degradation; CO(2) and NH(3) from urea (urease route): step 1/1. This Sulfurisphaera tokodaii (strain DSM 16993 / JCM 10545 / NBRC 100140 / 7) (Sulfolobus tokodaii) protein is Urease subunit gamma/beta.